The chain runs to 298 residues: Acetylglutamate kinase (298 aa).

Residues 68–69 (GG), R90, and N195 contribute to the substrate site.

Belongs to the acetylglutamate kinase family. ArgB subfamily.

Its subcellular location is the cytoplasm. It catalyses the reaction N-acetyl-L-glutamate + ATP = N-acetyl-L-glutamyl 5-phosphate + ADP. It participates in amino-acid biosynthesis; L-arginine biosynthesis; N(2)-acetyl-L-ornithine from L-glutamate: step 2/4. In terms of biological role, catalyzes the ATP-dependent phosphorylation of N-acetyl-L-glutamate. The polypeptide is Acetylglutamate kinase (Hydrogenovibrio crunogenus (strain DSM 25203 / XCL-2) (Thiomicrospira crunogena)).